Reading from the N-terminus, the 138-residue chain is Phosphoribosyl-AMP cyclohydrolase (138 aa).

Asp84 provides a ligand contact to Mg(2+). Cys85 provides a ligand contact to Zn(2+). Residues Asp86 and Asp88 each coordinate Mg(2+). 2 residues coordinate Zn(2+): Cys102 and Cys109.

The protein belongs to the PRA-CH family. As to quaternary structure, homodimer. The cofactor is Mg(2+). Zn(2+) is required as a cofactor.

It is found in the cytoplasm. It carries out the reaction 1-(5-phospho-beta-D-ribosyl)-5'-AMP + H2O = 1-(5-phospho-beta-D-ribosyl)-5-[(5-phospho-beta-D-ribosylamino)methylideneamino]imidazole-4-carboxamide. It functions in the pathway amino-acid biosynthesis; L-histidine biosynthesis; L-histidine from 5-phospho-alpha-D-ribose 1-diphosphate: step 3/9. Functionally, catalyzes the hydrolysis of the adenine ring of phosphoribosyl-AMP. The protein is Phosphoribosyl-AMP cyclohydrolase of Burkholderia pseudomallei (strain K96243).